A 410-amino-acid chain; its full sequence is Gamma-glutamyl phosphate reductase (410 aa).

This sequence belongs to the gamma-glutamyl phosphate reductase family.

The protein resides in the cytoplasm. The enzyme catalyses L-glutamate 5-semialdehyde + phosphate + NADP(+) = L-glutamyl 5-phosphate + NADPH + H(+). Its pathway is amino-acid biosynthesis; L-proline biosynthesis; L-glutamate 5-semialdehyde from L-glutamate: step 2/2. In terms of biological role, catalyzes the NADPH-dependent reduction of L-glutamate 5-phosphate into L-glutamate 5-semialdehyde and phosphate. The product spontaneously undergoes cyclization to form 1-pyrroline-5-carboxylate. The chain is Gamma-glutamyl phosphate reductase from Campylobacter jejuni subsp. jejuni serotype O:23/36 (strain 81-176).